Consider the following 291-residue polypeptide: Bifunctional protein FolD (291 aa).

NADP(+) is bound by residues 166-168, Ile191, and Ile232; that span reads GAG.

Belongs to the tetrahydrofolate dehydrogenase/cyclohydrolase family. In terms of assembly, homodimer.

It carries out the reaction (6R)-5,10-methylene-5,6,7,8-tetrahydrofolate + NADP(+) = (6R)-5,10-methenyltetrahydrofolate + NADPH. The catalysed reaction is (6R)-5,10-methenyltetrahydrofolate + H2O = (6R)-10-formyltetrahydrofolate + H(+). It functions in the pathway one-carbon metabolism; tetrahydrofolate interconversion. Catalyzes the oxidation of 5,10-methylenetetrahydrofolate to 5,10-methenyltetrahydrofolate and then the hydrolysis of 5,10-methenyltetrahydrofolate to 10-formyltetrahydrofolate. This chain is Bifunctional protein FolD, found in Aquifex aeolicus (strain VF5).